Reading from the N-terminus, the 419-residue chain is MDKLTIQASKPLTGSVVISGAKNAALPILMAGVLAETDFVLSNVPELRDVSTSCKLLRCLGAEVDELGGGRIRISTTNLNEFCAPYDLVKTMRASILILGPLLARFGTADVSLPGGCAIGARPVNLHLHGLEQMGAKIEVKEGYIKARVDGRLKGAHIFMDMISVGATENLLMAAALADGITIIENAAQEPEVTDLAHCLIAMGAKITGVGTATLKIEGVERLQGCEYRVMPDRIETGTFLVAAAVTRGRIRCENADPASMEAVLAKLEDAGATVTSGEDWIELDMHGKQPKAVNIKTAPYPAFPTDMQAQFCVLNALAQGTGRVTETIFENRFMHVPELIRMGANMELEGHTCIIQGIDKLNGAQVMATDLRASASLVIAGLMAEGTTLVDRIYHLDRGYEHIESKFQGLGAEVIRVK.

Residue 22-23 participates in phosphoenolpyruvate binding; it reads KN. Arg93 serves as a coordination point for UDP-N-acetyl-alpha-D-glucosamine. The Proton donor role is filled by Cys117. Cys117 carries the post-translational modification 2-(S-cysteinyl)pyruvic acid O-phosphothioketal. Residues Asp307 and Ile329 each contribute to the UDP-N-acetyl-alpha-D-glucosamine site.

The protein belongs to the EPSP synthase family. MurA subfamily.

The protein resides in the cytoplasm. It catalyses the reaction phosphoenolpyruvate + UDP-N-acetyl-alpha-D-glucosamine = UDP-N-acetyl-3-O-(1-carboxyvinyl)-alpha-D-glucosamine + phosphate. Its pathway is cell wall biogenesis; peptidoglycan biosynthesis. Functionally, cell wall formation. Adds enolpyruvyl to UDP-N-acetylglucosamine. The protein is UDP-N-acetylglucosamine 1-carboxyvinyltransferase of Shewanella denitrificans (strain OS217 / ATCC BAA-1090 / DSM 15013).